Consider the following 330-residue polypeptide: UPF0353 protein MAP_3434 (330 aa).

A run of 2 helical transmembrane segments spans residues 21 to 41 and 63 to 83; these read GMLL…VVQA and LPIA…ATPT. Residues 94 to 289 enclose the VWFA domain; that stretch reads VIMLVIDMSQ…GELQKSYNAI (196 aa). The chain crosses the membrane as a helical span at residues 304 to 324; that stretch reads AGWLRLGVLTALIATALALLI.

It belongs to the UPF0353 family.

It localises to the cell membrane. The sequence is that of UPF0353 protein MAP_3434 from Mycolicibacterium paratuberculosis (strain ATCC BAA-968 / K-10) (Mycobacterium paratuberculosis).